We begin with the raw amino-acid sequence, 431 residues long: MENKSNSQILFAEAQQYIPGGVNSPVRAFKSVGQEFPRFIKFAKGAYLYDVDWNKYIDYIGSWGPMILGHCDDDVLEAIQCQVKNGLSYGAPCKQEVDLAKKIIELMPNIEQVRFVNSGTEATMSAIRLARAYTCRNKIIKFEGCYHGHADEFLVAAGSGALSLGQPNSPGVPEDVVKDTLVASFNDMESIQALFEKYKDEIACIIIEPIAGNMNMIFPQDDFLAKLRAICDQNSSLLIFDEVMTGFRVALGGAQSIYNVKPDLTTLGKVIGGGMPVGAFGGRKEIMQKVSPAGPVYQAGTLSGNPIAMTAGIKTLEKISQPGFFDELGAKAQKLVDGLNEAAKAYDFNFHAKCLGGMFGLFFCSDKIAVNTFVDLGKTNLKMFNQFFAYMLDNGVYLAPSAYEAGFISIAHSDEDIEKTIYLAKKFFQEN.

Position 269 is an N6-(pyridoxal phosphate)lysine (lysine 269).

This sequence belongs to the class-III pyridoxal-phosphate-dependent aminotransferase family. HemL subfamily. As to quaternary structure, homodimer. The cofactor is pyridoxal 5'-phosphate.

Its subcellular location is the cytoplasm. It catalyses the reaction (S)-4-amino-5-oxopentanoate = 5-aminolevulinate. The protein operates within porphyrin-containing compound metabolism; protoporphyrin-IX biosynthesis; 5-aminolevulinate from L-glutamyl-tRNA(Glu): step 2/2. The sequence is that of Glutamate-1-semialdehyde 2,1-aminomutase from Francisella tularensis subsp. tularensis (strain SCHU S4 / Schu 4).